Reading from the N-terminus, the 121-residue chain is Colipase-like protein 1 (121 aa).

The N-terminal stretch at methionine 1–glycine 23 is a signal peptide. Intrachain disulfides connect cysteine 39-cysteine 50, cysteine 45-cysteine 61, cysteine 49-cysteine 83, cysteine 71-cysteine 91, and cysteine 85-cysteine 107.

Belongs to the colipase family. Exclusively expressed in epididymis, in the corpus region.

The protein resides in the secreted. This Homo sapiens (Human) protein is Colipase-like protein 1 (CLPSL1).